Here is a 463-residue protein sequence, read N- to C-terminus: Nuclear hormone receptor family member nhr-3 (463 aa).

A DNA-binding region (nuclear receptor) is located at residues 50–125; sequence STICSVCCDE…VGMEPDAIRP (76 aa). NR C4-type zinc fingers lie at residues 53 to 73 and 89 to 113; these read CSVC…CFGC and CRYS…FQKC. Residues 121–131 are compositionally biased toward basic and acidic residues; it reads DAIRPDRDKTG. The segment at 121 to 143 is disordered; it reads DAIRPDRDKTGRQKNPRRNTEGS. One can recognise an NR LBD domain in the interval 199-462; that stretch reads EIENIVIQLQ…VLEELLFLDR (264 aa).

The protein belongs to the nuclear hormone receptor family.

Its subcellular location is the nucleus. In terms of biological role, orphan nuclear receptor. In Caenorhabditis elegans, this protein is Nuclear hormone receptor family member nhr-3 (nhr-3).